Reading from the N-terminus, the 275-residue chain is 18S rRNA (guanine(1575)-N(7))-methyltransferase (275 aa).

Residues arginine 256 to phenylalanine 275 are disordered. The Nuclear localization signal motif lies at glycine 257–serine 264.

It belongs to the class I-like SAM-binding methyltransferase superfamily. BUD23/WBSCR22 family. As to quaternary structure, interacts with TRM112. Interacts with ECM16.

Its subcellular location is the cytoplasm. The protein resides in the nucleus. It catalyses the reaction guanosine(1575) in yeast 18S rRNA + S-adenosyl-L-methionine = N(7)-methylguanosine(1575) in yeast 18S rRNA + S-adenosyl-L-homocysteine. Functionally, S-adenosyl-L-methionine-dependent methyltransferase that specifically methylates the N(7) position of guanine 1575 (m7G1575) in 18S rRNA. Requires the methyltransferase adapter protein TRM112 for full rRNA methyltransferase activity. Important for biogenesis end export of the 40S ribosomal subunit independent on its methyltransferase activity. Required for efficient cleavage of the primary 35S precursor rRNA at site A2. Involved in positioning the proximal bud pole signal. This chain is 18S rRNA (guanine(1575)-N(7))-methyltransferase (BUD23), found in Saccharomyces cerevisiae (strain ATCC 204508 / S288c) (Baker's yeast).